A 98-amino-acid chain; its full sequence is DNA-binding protein Fis (98 aa).

The segment at residues 74–93 is a DNA-binding region (H-T-H motif); sequence QTRAALMMGINRGTLRKKLK.

Belongs to the transcriptional regulatory Fis family. As to quaternary structure, homodimer.

In terms of biological role, activates ribosomal RNA transcription. Plays a direct role in upstream activation of rRNA promoters. This is DNA-binding protein Fis from Photorhabdus laumondii subsp. laumondii (strain DSM 15139 / CIP 105565 / TT01) (Photorhabdus luminescens subsp. laumondii).